The primary structure comprises 275 residues: MTTTNLSALADPLRLYDEVFGSRLLLGTARYPSPQSLEDAVRACGPAMLTVALRRQSAGTPEGGAGFWKMLRALGVPVLPNTAGCYSADEAYTLAQMSREVFETDWIKLEVIGDDYTLQPDTLALPAAAERLIRDGFKVLPYCTEDLVLCRRLLDVGCRALMPWAAPIGTGRGPTNPYGLRLLRERLPDVPLIVDAGLGVPSHATQVMEWGYDGVLLNTAVAQAGDPVAMARAFAMATQAGRLARLSGPMPERDVAQASTPVVGLPFWHADKNSA.

Lys-108 serves as the catalytic Schiff-base intermediate with DXP. 1-deoxy-D-xylulose 5-phosphate is bound by residues Gly-169, 196-197 (AG), and 218-219 (NT).

Belongs to the ThiG family. As to quaternary structure, homotetramer. Forms heterodimers with either ThiH or ThiS.

It localises to the cytoplasm. The enzyme catalyses [ThiS sulfur-carrier protein]-C-terminal-Gly-aminoethanethioate + 2-iminoacetate + 1-deoxy-D-xylulose 5-phosphate = [ThiS sulfur-carrier protein]-C-terminal Gly-Gly + 2-[(2R,5Z)-2-carboxy-4-methylthiazol-5(2H)-ylidene]ethyl phosphate + 2 H2O + H(+). The protein operates within cofactor biosynthesis; thiamine diphosphate biosynthesis. In terms of biological role, catalyzes the rearrangement of 1-deoxy-D-xylulose 5-phosphate (DXP) to produce the thiazole phosphate moiety of thiamine. Sulfur is provided by the thiocarboxylate moiety of the carrier protein ThiS. In vitro, sulfur can be provided by H(2)S. The protein is Thiazole synthase of Ralstonia nicotianae (strain ATCC BAA-1114 / GMI1000) (Ralstonia solanacearum).